A 312-amino-acid chain; its full sequence is MDGENHSVVSEFLFLGLTHSWEIQLLLLVFSSVLYVASITGNILIVFSVTTDPHLHSPMYFLLASLSFIDLGACSVTSPKMIYDLFRKRKVISFGGCIAQIFFIHVVGGVEMVLLIAMAFDRYVALCKPLHYLTIMSPRMCLSFLAVAWTLGVSHSLFQLAFLVNLAFCGPNVLDSFYCDLPRLLRLACTDTYRLQFMVTVNSGFICVGTFFILLISYVFILFTVWKHSSGGSSKALSTLSAHSTVVLLFFGPPMFVYTRPHPNSQMDKFLAIFDAVLTPFLNPVVYTFRNKEMKAAIKRVCKQLVIYKRIS.

At 1–25 the chain is on the extracellular side; it reads MDGENHSVVSEFLFLGLTHSWEIQL. Residue Asn5 is glycosylated (N-linked (GlcNAc...) asparagine). The chain crosses the membrane as a helical span at residues 26-49; sequence LLLVFSSVLYVASITGNILIVFSV. The Cytoplasmic segment spans residues 50-57; that stretch reads TTDPHLHS. A helical transmembrane segment spans residues 58–79; sequence PMYFLLASLSFIDLGACSVTSP. The Extracellular portion of the chain corresponds to 80-100; that stretch reads KMIYDLFRKRKVISFGGCIAQ. A disulfide bond links Cys97 and Cys189. Residues 101–120 form a helical membrane-spanning segment; sequence IFFIHVVGGVEMVLLIAMAF. Residues 121–139 are Cytoplasmic-facing; the sequence is DRYVALCKPLHYLTIMSPR. Residues 140–158 traverse the membrane as a helical segment; the sequence is MCLSFLAVAWTLGVSHSLF. At 159–195 the chain is on the extracellular side; that stretch reads QLAFLVNLAFCGPNVLDSFYCDLPRLLRLACTDTYRL. The helical transmembrane segment at 196-219 threads the bilayer; the sequence is QFMVTVNSGFICVGTFFILLISYV. The Cytoplasmic segment spans residues 220 to 235; that stretch reads FILFTVWKHSSGGSSK. Residues 236–258 traverse the membrane as a helical segment; that stretch reads ALSTLSAHSTVVLLFFGPPMFVY. The Extracellular portion of the chain corresponds to 259–269; the sequence is TRPHPNSQMDK. The helical transmembrane segment at 270–289 threads the bilayer; the sequence is FLAIFDAVLTPFLNPVVYTF. Residues 290–312 are Cytoplasmic-facing; sequence RNKEMKAAIKRVCKQLVIYKRIS.

This sequence belongs to the G-protein coupled receptor 1 family.

The protein localises to the cell membrane. Odorant receptor. The protein is Olfactory receptor 4F3/4F16/4F29 (OR4F3) of Homo sapiens (Human).